The chain runs to 912 residues: Protein translocase subunit SecA (912 aa).

ATP contacts are provided by residues glutamine 87, 105–109 (GEGKT), and aspartate 499. 4 residues coordinate Zn(2+): cysteine 897, cysteine 899, cysteine 908, and histidine 909.

This sequence belongs to the SecA family. In terms of assembly, monomer and homodimer. Part of the essential Sec protein translocation apparatus which comprises SecA, SecYEG and auxiliary proteins SecDF-YajC and YidC. Requires Zn(2+) as cofactor.

The protein resides in the cell inner membrane. The protein localises to the cytoplasm. It catalyses the reaction ATP + H2O + cellular proteinSide 1 = ADP + phosphate + cellular proteinSide 2.. Functionally, part of the Sec protein translocase complex. Interacts with the SecYEG preprotein conducting channel. Has a central role in coupling the hydrolysis of ATP to the transfer of proteins into and across the cell membrane, serving both as a receptor for the preprotein-SecB complex and as an ATP-driven molecular motor driving the stepwise translocation of polypeptide chains across the membrane. This chain is Protein translocase subunit SecA, found in Rhizorhabdus wittichii (strain DSM 6014 / CCUG 31198 / JCM 15750 / NBRC 105917 / EY 4224 / RW1) (Sphingomonas wittichii).